Here is a 218-residue protein sequence, read N- to C-terminus: CTP-dependent diacylglycerol kinase 1 (218 aa).

Over 1-19 (MSTKLTWSQWSKKHEIPRK) the chain is Lumenal. Residues 20 to 37 (ALHTSIGFFALLLQGCGY) form a helical membrane-spanning segment. Residue H38 is a topological domain, cytoplasmic. The chain crosses the membrane as a helical span at residues 39 to 59 (AAQIIPVIEIGFIPAFTGDVI). Residues 60-88 (RFNWPAFSRLYNRVIGPLMRESEKNAWNG) are Lumenal-facing. The chain crosses the membrane as a helical span at residues 89 to 109 (VIFYMIGVWIVLKVFPEEIAV). At 110–142 (MSVLLLSWCDTTASTVGRKWGKYTPKIAKNKSL) the chain is on the cytoplasmic side. Residues 143–163 (AGSLGAFVCGVFCCYVYWGLF) form a helical membrane-spanning segment. At 164–179 (RTGPDSLAAQSRIPFP) the chain is on the lumenal side. Transmembrane regions (helical) follow at residues 180–200 (WLCLINGFIGAFAEAMDVWGL) and 201–217 (DDNLVIPVVSACLLYLI). Position 218 (M218) is a topological domain, lumenal.

It belongs to the DGK1 family. The cofactor is Ca(2+). It depends on Mg(2+) as a cofactor.

Its subcellular location is the endoplasmic reticulum membrane. The protein localises to the nucleus membrane. It carries out the reaction a 1,2-diacyl-sn-glycerol + CTP = a 1,2-diacyl-sn-glycero-3-phosphate + CDP + H(+). In terms of biological role, CTP-dependent diacylglycerol kinase that catalyzes the phosphorylation of diacylglycerol (DAG) to phosphatidate (PA). Controls phosphatidate levels at the nuclear envelope. Counteracts the activity of PA phosphatase ned1. May be involved in vesicle trafficking between the endoplasmic reticulum and the Golgi apparatus. Involved in pre-tRNA splicing. The chain is CTP-dependent diacylglycerol kinase 1 (ptp4) from Schizosaccharomyces pombe (strain 972 / ATCC 24843) (Fission yeast).